The primary structure comprises 884 residues: Valine--tRNA ligase (884 aa).

The short motif at 43–53 (PNVTGSLHIGH) is the 'HIGH' region element. Residues 530–534 (KMSKS) carry the 'KMSKS' region motif. Lys533 provides a ligand contact to ATP. Residues 817–884 (VIDLDAERGR…KLKAALERLM (68 aa)) adopt a coiled-coil conformation.

The protein belongs to the class-I aminoacyl-tRNA synthetase family. ValS type 1 subfamily. Monomer.

The protein localises to the cytoplasm. The enzyme catalyses tRNA(Val) + L-valine + ATP = L-valyl-tRNA(Val) + AMP + diphosphate. Catalyzes the attachment of valine to tRNA(Val). As ValRS can inadvertently accommodate and process structurally similar amino acids such as threonine, to avoid such errors, it has a 'posttransfer' editing activity that hydrolyzes mischarged Thr-tRNA(Val) in a tRNA-dependent manner. This Zymomonas mobilis subsp. mobilis (strain ATCC 31821 / ZM4 / CP4) protein is Valine--tRNA ligase.